The chain runs to 290 residues: 6-phospho-5-dehydro-2-deoxy-D-gluconate aldolase (290 aa).

Aspartate 85 acts as the Proton donor in catalysis. Zn(2+)-binding residues include histidine 86 and histidine 180. Glycine 181 contributes to the dihydroxyacetone phosphate binding site. Histidine 208 serves as a coordination point for Zn(2+). Residues 209–211 and 230–233 contribute to the dihydroxyacetone phosphate site; these read GAS and NINT. A Phosphothreonine modification is found at threonine 233.

It belongs to the class II fructose-bisphosphate aldolase family. IolJ subfamily. Zn(2+) serves as cofactor.

The enzyme catalyses 6-phospho-5-dehydro-2-deoxy-D-gluconate = 3-oxopropanoate + dihydroxyacetone phosphate. The protein operates within polyol metabolism; myo-inositol degradation into acetyl-CoA; acetyl-CoA from myo-inositol: step 6/7. Its function is as follows. Produces dihydroxyacetone phosphate (DHAP or glycerone phosphate) and malonic semialdehyde (MSA or 3-oxopropanoate) from 6-phospho-5-dehydro-2-deoxy-D-gluconate (DKGP). This is 6-phospho-5-dehydro-2-deoxy-D-gluconate aldolase (iolJ) from Bacillus velezensis (strain DSM 23117 / BGSC 10A6 / LMG 26770 / FZB42) (Bacillus amyloliquefaciens subsp. plantarum).